Reading from the N-terminus, the 382-residue chain is S-adenosylmethionine synthase (382 aa).

An ATP-binding site is contributed by H16. D18 contributes to the Mg(2+) binding site. K(+) is bound at residue E44. The L-methionine site is built by E57 and Q100. The segment at 100–110 (QSADIAIGVDE) is flexible loop. ATP contacts are provided by residues 165-167 (DAK), D240, 246-247 (RK), A263, and K267. D240 lines the L-methionine pocket. K271 is an L-methionine binding site.

The protein belongs to the AdoMet synthase family. As to quaternary structure, homotetramer; dimer of dimers. Mg(2+) serves as cofactor. It depends on K(+) as a cofactor.

The protein localises to the cytoplasm. The catalysed reaction is L-methionine + ATP + H2O = S-adenosyl-L-methionine + phosphate + diphosphate. Its pathway is amino-acid biosynthesis; S-adenosyl-L-methionine biosynthesis; S-adenosyl-L-methionine from L-methionine: step 1/1. In terms of biological role, catalyzes the formation of S-adenosylmethionine (AdoMet) from methionine and ATP. The overall synthetic reaction is composed of two sequential steps, AdoMet formation and the subsequent tripolyphosphate hydrolysis which occurs prior to release of AdoMet from the enzyme. The polypeptide is S-adenosylmethionine synthase (Alcanivorax borkumensis (strain ATCC 700651 / DSM 11573 / NCIMB 13689 / SK2)).